The primary structure comprises 66 residues: uncharacterized protein (66 aa).

2 consecutive transmembrane segments (helical) span residues 4–24 and 38–58; these read ALFIAGQTYLWLNLTHLLLIF and LLTPTVPCPTLLGIDFLILVL.

It localises to the membrane. This is an uncharacterized protein from Saccharomyces cerevisiae (strain ATCC 204508 / S288c) (Baker's yeast).